Reading from the N-terminus, the 304-residue chain is L-lactate dehydrogenase (304 aa).

Residues valine 11, aspartate 32, arginine 37, and glycine 76–alanine 77 contribute to the NAD(+) site. Substrate contacts are provided by residues glutamine 79, arginine 85, and asparagine 117–aspartate 120. Serine 138 provides a ligand contact to NAD(+). Position 143 to 146 (aspartate 143 to arginine 146) interacts with substrate. 2 residues coordinate beta-D-fructose 1,6-bisphosphate: arginine 148 and histidine 163. Catalysis depends on histidine 170, which acts as the Proton acceptor. Residue threonine 225 coordinates substrate.

The protein belongs to the LDH/MDH superfamily. LDH family. In terms of assembly, homotetramer.

The protein resides in the cytoplasm. It catalyses the reaction (S)-lactate + NAD(+) = pyruvate + NADH + H(+). It participates in fermentation; pyruvate fermentation to lactate; (S)-lactate from pyruvate: step 1/1. Allosterically activated by fructose 1,6-bisphosphate (FBP). Functionally, catalyzes the conversion of lactate to pyruvate. The chain is L-lactate dehydrogenase from Deinococcus radiodurans (strain ATCC 13939 / DSM 20539 / JCM 16871 / CCUG 27074 / LMG 4051 / NBRC 15346 / NCIMB 9279 / VKM B-1422 / R1).